Here is a 201-residue protein sequence, read N- to C-terminus: ATP-dependent Clp protease proteolytic subunit (201 aa).

The active-site Nucleophile is S105. H130 is an active-site residue.

Belongs to the peptidase S14 family. As to quaternary structure, fourteen ClpP subunits assemble into 2 heptameric rings which stack back to back to give a disk-like structure with a central cavity, resembling the structure of eukaryotic proteasomes.

It localises to the cytoplasm. It catalyses the reaction Hydrolysis of proteins to small peptides in the presence of ATP and magnesium. alpha-casein is the usual test substrate. In the absence of ATP, only oligopeptides shorter than five residues are hydrolyzed (such as succinyl-Leu-Tyr-|-NHMec, and Leu-Tyr-Leu-|-Tyr-Trp, in which cleavage of the -Tyr-|-Leu- and -Tyr-|-Trp bonds also occurs).. Cleaves peptides in various proteins in a process that requires ATP hydrolysis. Has a chymotrypsin-like activity. Plays a major role in the degradation of misfolded proteins. This chain is ATP-dependent Clp protease proteolytic subunit, found in Aquifex aeolicus (strain VF5).